The chain runs to 486 residues: Citrate synthase 3, mitochondrial (486 aa).

A mitochondrion-targeting transit peptide spans 1–23 (MVQRLLPGAHICRRSFNSSAIIK). Active-site residues include His-315, His-361, and Asp-419. The Microbody targeting signal signature appears at 484–486 (NKL).

The protein belongs to the citrate synthase family.

It localises to the mitochondrion. It catalyses the reaction oxaloacetate + acetyl-CoA + H2O = citrate + CoA + H(+). Its pathway is carbohydrate metabolism; tricarboxylic acid cycle; isocitrate from oxaloacetate: step 1/2. Functionally, dual specificity mitochondrial citrate and methylcitrate synthase with similar catalytic efficiency with both acetyl-CoA and propionyl-CoA. This Saccharomyces cerevisiae (strain ATCC 204508 / S288c) (Baker's yeast) protein is Citrate synthase 3, mitochondrial.